The chain runs to 706 residues: Serotransferrin (706 aa).

The N-terminal stretch at 1–19 (MRLAIRALLACAVLGLCLA) is a signal peptide. Transferrin-like domains lie at 23-349 (VRWC…NLRE) and 363-691 (VKWC…NLRQ). 2 cysteine pairs are disulfide-bonded: C26/C64 and C36/C55. Residue R40 is modified to Dimethylated arginine. Residues D79 and Y111 each contribute to the Fe(3+) site. 5 cysteine pairs are disulfide-bonded: C134-C215, C174-C190, C177-C198, C187-C200, and C248-C262. The hydrogencarbonate site is built by T136, R140, A142, and G143. Y209 serves as a coordination point for Fe(3+). H270 contributes to the Fe(3+) binding site. Intrachain disulfides connect C360–C623, C366–C398, C376–C389, C423–C701, C441–C664, C474–C550, C498–C692, C508–C522, C519–C533, C590–C604, and C642–C647. S391 carries the phosphoserine modification. Residues D413 and Y449 each coordinate Fe(3+). The hydrogencarbonate site is built by T476, R480, A482, and G483. N-linked (GlcNAc...) asparagine glycosylation is present at N515. Fe(3+) is bound at residue Y544. H612 provides a ligand contact to Fe(3+). Phosphoserine is present on S693.

Belongs to the transferrin family. Monomer. Part of a complex composed of SLC40A1/ferroportin, TF/transferrin and HEPH/hephaestin that transfers iron from cells to transferrin. As to expression, expressed by the liver and secreted in plasma.

It is found in the secreted. Its function is as follows. Transferrins are iron binding transport proteins which can bind two Fe(3+) ions in association with the binding of an anion, usually bicarbonate. It is responsible for the transport of iron from sites of absorption and heme degradation to those of storage and utilization. Serum transferrin may also have a further role in stimulating cell proliferation. This chain is Serotransferrin (TF), found in Equus caballus (Horse).